We begin with the raw amino-acid sequence, 423 residues long: O-methyltransferase aoiF (423 aa).

D273 serves as a coordination point for S-adenosyl-L-methionine. H324 acts as the Proton acceptor in catalysis.

It belongs to the class I-like SAM-binding methyltransferase superfamily. Cation-independent O-methyltransferase family.

It participates in secondary metabolite biosynthesis. In terms of biological role, O-methyltransferase; part of the gene cluster that mediates the biosynthesis of a methylated derivative of known natural products orthosporin and diaporthin. Within the pathway, aoiF catalyzes the biotransformation of orthosporin to diaporthin but also of diaporthin to the final product, by performing a tandem methylation of the polyketide core. Orthosporin is produced by an oxidoreductase that has still to be identified and that catalyzes the stereospecific reduction of the carbonyl moiety of the hexaketide isocoumarin scaffold produced by the non-reducing polyketide synthase aoiG to generate the S-configured secondary alcohol at C-11. The polypeptide is O-methyltransferase aoiF (Aspergillus oryzae (strain ATCC 42149 / RIB 40) (Yellow koji mold)).